The following is a 121-amino-acid chain: Large ribosomal subunit protein uL18 (121 aa).

This sequence belongs to the universal ribosomal protein uL18 family. As to quaternary structure, part of the 50S ribosomal subunit; part of the 5S rRNA/L5/L18/L25 subcomplex. Contacts the 5S and 23S rRNAs.

In terms of biological role, this is one of the proteins that bind and probably mediate the attachment of the 5S RNA into the large ribosomal subunit, where it forms part of the central protuberance. This Ehrlichia chaffeensis (strain ATCC CRL-10679 / Arkansas) protein is Large ribosomal subunit protein uL18.